Reading from the N-terminus, the 197-residue chain is Large ribosomal subunit protein uL13C (197 aa).

Belongs to the universal ribosomal protein uL13 family. In terms of assembly, component of the large ribosomal subunit (LSU). Mature yeast ribosomes consist of a small (40S) and a large (60S) subunit. The 40S small subunit contains 1 molecule of ribosomal RNA (18S rRNA) and at least 33 different proteins. The large 60S subunit contains 3 rRNA molecules (25S, 5.8S and 5S rRNA) and at least 46 different proteins.

It localises to the cytoplasm. The protein localises to the nucleus. The protein resides in the nucleolus. Functionally, component of the ribosome, a large ribonucleoprotein complex responsible for the synthesis of proteins in the cell. The small ribosomal subunit (SSU) binds messenger RNAs (mRNAs) and translates the encoded message by selecting cognate aminoacyl-transfer RNA (tRNA) molecules. The large subunit (LSU) contains the ribosomal catalytic site termed the peptidyl transferase center (PTC), which catalyzes the formation of peptide bonds, thereby polymerizing the amino acids delivered by tRNAs into a polypeptide chain. The nascent polypeptides leave the ribosome through a tunnel in the LSU and interact with protein factors that function in enzymatic processing, targeting, and the membrane insertion of nascent chains at the exit of the ribosomal tunnel. This is Large ribosomal subunit protein uL13C (rpl1603) from Schizosaccharomyces pombe (strain 972 / ATCC 24843) (Fission yeast).